The sequence spans 597 residues: Probable methyltransferase-like protein 25 (597 aa).

The segment covering 245–254 (ECKGDAESVQ) has biased composition (basic and acidic residues). Disordered regions lie at residues 245–265 (ECKG…DLSA) and 317–342 (TSSQ…KARD). Positions 317 to 326 (TSSQVQNTEK) are enriched in polar residues.

Probable methyltransferase. In Mus musculus (Mouse), this protein is Probable methyltransferase-like protein 25 (Mettl25).